Reading from the N-terminus, the 196-residue chain is Ribosome maturation factor RimP (196 aa).

Residues 163–196 form a disordered region; sequence GLAPSKPTGPAPKRPKPKTNSSSNEPAAKKPRAE.

It belongs to the RimP family.

It localises to the cytoplasm. In terms of biological role, required for maturation of 30S ribosomal subunits. In Stenotrophomonas maltophilia (strain R551-3), this protein is Ribosome maturation factor RimP.